The following is a 274-amino-acid chain: UPF0758 protein RHE_CH01848 (274 aa).

A disordered region spans residues 1–37 (MAKGPVATSSDDELPFETEEPVADERSFFGGRPQKPA). Positions 10 to 22 (SDDELPFETEEPV) are enriched in acidic residues. An MPN domain is found at 152-274 (VLSSWSSVIQ…HVSLKGLKLI (123 aa)). Residues His-223, His-225, and Asp-236 each contribute to the Zn(2+) site. A JAMM motif motif is present at residues 223 to 236 (HNHPSGDPTPSRAD).

Belongs to the UPF0758 family.

The protein is UPF0758 protein RHE_CH01848 of Rhizobium etli (strain ATCC 51251 / DSM 11541 / JCM 21823 / NBRC 15573 / CFN 42).